A 239-amino-acid chain; its full sequence is Ribonuclease 3 (239 aa).

The region spanning 12-137 (RAKLEGLIGH…LIAAIYLDGG (126 aa)) is the RNase III domain. A Mg(2+)-binding site is contributed by Glu-50. Asp-54 is a catalytic residue. 2 residues coordinate Mg(2+): Asp-123 and Glu-126. Glu-126 is an active-site residue. The DRBM domain maps to 162–231 (DAKTELQEWS…ATKMLEREGI (70 aa)).

Belongs to the ribonuclease III family. Homodimer. Requires Mg(2+) as cofactor.

It is found in the cytoplasm. It catalyses the reaction Endonucleolytic cleavage to 5'-phosphomonoester.. Digests double-stranded RNA. Involved in the processing of primary rRNA transcript to yield the immediate precursors to the large and small rRNAs (23S and 16S). Processes some mRNAs, and tRNAs when they are encoded in the rRNA operon. Processes pre-crRNA and tracrRNA of type II CRISPR loci if present in the organism. The polypeptide is Ribonuclease 3 (Rhizobium johnstonii (strain DSM 114642 / LMG 32736 / 3841) (Rhizobium leguminosarum bv. viciae)).